Consider the following 56-residue polypeptide: Large ribosomal subunit protein bL33 (56 aa).

This sequence belongs to the bacterial ribosomal protein bL33 family.

The chain is Large ribosomal subunit protein bL33 from Delftia acidovorans (strain DSM 14801 / SPH-1).